The following is a 197-amino-acid chain: Recombination protein RecR (197 aa).

A C4-type zinc finger spans residues 55-70; that stretch reads CVQCRDFTESEVCAIC. In terms of domain architecture, Toprim spans 78–173; the sequence is QQLCVVESPA…RPSRLAQGMP (96 aa).

Belongs to the RecR family.

In terms of biological role, may play a role in DNA repair. It seems to be involved in an RecBC-independent recombinational process of DNA repair. It may act with RecF and RecO. This Xanthomonas campestris pv. campestris (strain 8004) protein is Recombination protein RecR.